The following is a 264-amino-acid chain: Mannose-specific lectin CEA (264 aa).

A signal peptide spans 1 to 23 (MAKLLLFLLPAILGLLVPRSAVA). Bulb-type lectin domains lie at 26 to 131 (TNYL…PWVP) and 145 to 252 (NNLL…PQAK). Residues 51–55 (QDDCN), Tyr59, Trp63, Gln64, 170–174 (QGDCN), Tyr178, and 182–185 (YGWQ) contribute to the beta-D-mannose site. The Carbohydrate-binding motif 1 motif lies at 51–59 (QDDCNLVLY). 2 disulfide bridges follow: Cys54-Cys74 and Cys173-Cys195. A Carbohydrate-binding motif 2 motif is present at residues 170 to 178 (QGDCNLVLY).

Forms heterotetramer of 2 chains 1 and 2 chains 2 arranged as a dimer of chain 1 and chain 2 heterodimers.

It localises to the secreted. Its function is as follows. Mannose-specific lectin. Shows agglutinating activity towards erythrocytes from rabbit. Has insecticidal activity against cotton aphids and other hemipteran insects. This Colocasia esculenta (Wild taro) protein is Mannose-specific lectin CEA.